A 228-amino-acid polypeptide reads, in one-letter code: Ribosomal RNA small subunit methyltransferase G (228 aa).

S-adenosyl-L-methionine-binding positions include G70, L75, 120–121, and R138; that span reads AE. Positions 207 to 228 are disordered; sequence RRGDTRGPNRRVSPRRTGGAPA.

This sequence belongs to the methyltransferase superfamily. RNA methyltransferase RsmG family.

The protein localises to the cytoplasm. Its function is as follows. Specifically methylates the N7 position of guanine in position 518 of 16S rRNA. This Mycobacterium marinum (strain ATCC BAA-535 / M) protein is Ribosomal RNA small subunit methyltransferase G.